A 348-amino-acid polypeptide reads, in one-letter code: Myricetin O-methyltransferase (348 aa).

M1 carries the N-acetylmethionine modification. S-adenosyl-L-methionine contacts are provided by G189, D212, D232, M233, and K246. Catalysis depends on H250, which acts as the Proton acceptor.

The N-terminus is blocked.

It carries out the reaction S-adenosyl-L-methionine + a 3'-hydroxyflavonoid = S-adenosyl-L-homocysteine + a 3'-methoxyflavonoid.. The catalysed reaction is S-adenosyl-L-methionine + a 5'-hydroxy-3'-methoxyflavonoid = S-adenosyl-L-homocysteine + a 3',5'-dimethoxyflavonoid.. Functionally, methylates myricetin and dihydromyricetin at 2 sites. Inactive towards 16-hydroxytabersonine, the phenylpropanoids 5-hydroxyferulate, caffeate and their CoA-esters, flavones and flavanones possessing 2 or 3 B-ring hydroxyl groups. In Catharanthus roseus (Madagascar periwinkle), this protein is Myricetin O-methyltransferase.